Consider the following 224-residue polypeptide: Type VII secretion system protein EsaE (224 aa).

In terms of assembly, interacts with EssD.

Its function is as follows. Component of the type VII secretion system (Ess). Plays a role in Esx protein secretion. Plays an essential role in the processing and secretion of EssD. The polypeptide is Type VII secretion system protein EsaE (Staphylococcus aureus (strain USA300)).